We begin with the raw amino-acid sequence, 786 residues long: Rho GTPase-activating protein 10 (786 aa).

The 256-residue stretch at 7 to 262 (EFSDCYLDSP…IRQNPKDHKR (256 aa)) folds into the BAR domain. A PH domain is found at 265-372 (QFTAEGYLYV…WLEALGGKEA (108 aa)). Positions 389 to 574 (AQLDKMGFTI…ILIENHEKIF (186 aa)) constitute a Rho-GAP domain. 2 disordered regions span residues 576 to 608 (TPPD…QRTK) and 621 to 727 (EDGD…PPES). Basic residues predominate over residues 599–608 (QSKRQGQRTK). Over residues 634 to 651 (PTSSLDSLSSPSPVTTAV) the composition is skewed to low complexity. A compositionally biased stretch (polar residues) spans 676-688 (IPGQTRSSMVQWL). Over residues 689–712 (NPQSPTTTSSNSAVTPLSPGSSPF) the composition is skewed to low complexity. Residues 728-786 (IRSRKARAVYPCEAEHSSELSFEIGAIFEDVQTSREPGWLEGTLNGKRGLIPQNYVKLL) enclose the SH3 domain.

In terms of assembly, interacts with PKN3. Interacts with caspase-activated PAK2 proteolytic fragment PAK-2p34; the interaction does not affect GRAF2/ARHGAP10 GTPase activation activity towards RHOA and CDC42. Interacts via its SH3 domain with PTK2/FAK1. Interacts with PTK2B/PYK2; the interaction negatively regulates GRAF2/ARHGAP10 GTPase-activating activity. Interacts with MICAL1 and WDR44; complex formation might transit from GRAF2/ARHGAP10-MICAL1 to GRAF2/ARHGAP10-WDR44 complexes. Phosphorylated. Phosphorylated in vitro by constitutive active PKN3. In terms of tissue distribution, high levels of expression in heart and skeletal muscle.

The protein resides in the cytoplasm. The protein localises to the perinuclear region. Its subcellular location is the cell membrane. It is found in the endosome membrane. In terms of biological role, GTPase-activating protein that catalyzes the conversion of active GTP-bound Rho GTPases to their inactive GDP-bound form, thus suppressing various Rho GTPase-mediated cellular processes. Also converts Cdc42 to an inactive GDP-bound state. Essential for PTKB2 regulation of cytoskeletal organization via Rho family GTPases. Inhibits PAK2 proteolytic fragment PAK-2p34 kinase activity and changes its localization from the nucleus to the perinuclear region. Stabilizes PAK-2p34 thereby increasing stimulation of cell death. Associates with MICAL1 on the endosomal membrane to promote Rab8-Rab10-dependent tubule extension. After dissociation with MICAL1, recruits WDR44 which connects the endoplasmic reticulum (ER) with the endosomal tubule, thereby participating in the export of a subset of neosynthesized proteins. In Homo sapiens (Human), this protein is Rho GTPase-activating protein 10 (ARHGAP10).